Consider the following 216-residue polypeptide: Thymidine kinase (216 aa).

Residues G9–S16 and D86–Q89 each bind ATP. The active-site Proton acceptor is E87.

This sequence belongs to the thymidine kinase family. In terms of assembly, homotetramer.

The protein resides in the cytoplasm. The catalysed reaction is thymidine + ATP = dTMP + ADP + H(+). This chain is Thymidine kinase, found in Streptomyces avermitilis (strain ATCC 31267 / DSM 46492 / JCM 5070 / NBRC 14893 / NCIMB 12804 / NRRL 8165 / MA-4680).